A 464-amino-acid polypeptide reads, in one-letter code: Argininosuccinate lyase (464 aa).

Belongs to the lyase 1 family. Argininosuccinate lyase subfamily.

The protein resides in the cytoplasm. It catalyses the reaction 2-(N(omega)-L-arginino)succinate = fumarate + L-arginine. It participates in amino-acid biosynthesis; L-arginine biosynthesis; L-arginine from L-ornithine and carbamoyl phosphate: step 3/3. The polypeptide is Argininosuccinate lyase (Pseudomonas paraeruginosa (strain DSM 24068 / PA7) (Pseudomonas aeruginosa (strain PA7))).